Here is a 91-residue protein sequence, read N- to C-terminus: Small ribosomal subunit protein uS19 (91 aa).

Belongs to the universal ribosomal protein uS19 family.

Its function is as follows. Protein S19 forms a complex with S13 that binds strongly to the 16S ribosomal RNA. This Cupriavidus necator (strain ATCC 17699 / DSM 428 / KCTC 22496 / NCIMB 10442 / H16 / Stanier 337) (Ralstonia eutropha) protein is Small ribosomal subunit protein uS19.